A 206-amino-acid chain; its full sequence is Protein phosphatase inhibitor 2 (206 aa).

The interval 1-36 is disordered; sequence MAASTASHRPIKGILKNKTSAASPPVVPSAEQPRPI. Position 2 is an N-acetylalanine (Ala-2). Residues 12-17 form a required for binding PPP1CC region; that stretch reads KGILKN. The interval 44–56 is required for binding the 'RVXF' binding groove of PPP1CC; that stretch reads KSQKWDEMNILAT. At Ser-45 the chain carries Phosphoserine; by ATM. Thr-74 bears the Phosphothreonine mark. Positions 75-143 are disordered; the sequence is PYHNMIGDDE…EREKKRQFEM (69 aa). Residues 81-92 are compositionally biased toward acidic residues; it reads GDDEDAYSDSEG. A phosphoserine mark is found at Ser-88 and Ser-90. 2 positions are modified to phosphothreonine: Thr-97 and Thr-117. The span at 111-121 shows a compositional bias: basic and acidic residues; it reads SEPKYRTREQE. Residues Ser-122, Ser-123, and Ser-131 each carry the phosphoserine modification. Acidic residues predominate over residues 122 to 131; it reads SSGEEDNDLS. Over residues 132 to 143 the composition is skewed to basic and acidic residues; that stretch reads PEEREKKRQFEM. The required for binding PPP1CC catalytic center, displacing metal ions and inhibition of PPP1CC catalytic activity stretch occupies residues 148–151; that stretch reads HYNE. A disordered region spans residues 164–206; that stretch reads KDLHDDDEDEEMAETADGDSMNVEESSQGSTTSDHLQHKSQSS. The segment covering 168-180 has biased composition (acidic residues); that stretch reads DDDEDEEMAETAD. Polar residues predominate over residues 186 to 206; that stretch reads VEESSQGSTTSDHLQHKSQSS.

This sequence belongs to the protein phosphatase inhibitor 2 family. As to quaternary structure, heterodimer with PP1. Phosphorylation on Ser-45 by ATM activates PP1 by dissociating the PP1-PPP1R2 complex. Phosphorylation on Thr-74 by GSK3 activates PP1 by dissociating the PP1-PPP1R2 complex.

Its function is as follows. Inhibitor of protein-phosphatase 1. The protein is Protein phosphatase inhibitor 2 (Ppp1r2) of Mus musculus (Mouse).